Consider the following 373-residue polypeptide: Ferroptosis suppressor protein 1 (373 aa).

Gly-2 carries the N-myristoyl glycine lipid modification. The chain crosses the membrane as a helical span at residues 13 to 29 (VVVVGGGFGGTAAASLL). Residues 17–21 (GGGFG), Arg-53, and Val-81 each bind 6-hydroxy-FAD. At Lys-167 the chain carries N6-acetyllysine. Asp-284 contributes to the 6-hydroxy-FAD binding site.

Belongs to the FAD-dependent oxidoreductase family. Requires 6-hydroxy-FAD as cofactor. Post-translationally, N-myristoylation at Gly-2 mediates the recruitment to lipid droplets and plasma membrane. In terms of processing, acetylation at Lys-167 prevents AIFM2 ubiquitination and degradation, thereby inhibiting ferroptosis. KAT2B mediates acetylation at Lys-167, while HDAC3 removes it. Ubiquitinated. AIFM2 undergoes 'Lys-29'-ubiquitination and proteasomal degradation, which is inhibited by acetylation at Lys-167.

It localises to the lipid droplet. It is found in the cell membrane. The protein localises to the cytoplasm. Its subcellular location is the mitochondrion membrane. The protein resides in the nucleus. It catalyses the reaction ubiquinone-10 + NADH + H(+) = ubiquinol-10 + NAD(+). The catalysed reaction is phylloquinone + NADH + H(+) = phylloquinol + NAD(+). The enzyme catalyses menaquinone-4 + NADH + H(+) = menaquinol-4 + NAD(+). It carries out the reaction menadione + NADH + H(+) = menadiol + NAD(+). Its activity is regulated as follows. The modification by 4-hydroxy-2-nonenal (HNE) adduction in mitochondria results in loss of the oxidoreductase activity and activation of a novel function in mitochondrial oxidative stress signaling. Its function is as follows. An NAD(P)H-dependent oxidoreductase that acts as a key inhibitor of ferroptosis. At the plasma membrane, catalyzes reduction of coenzyme Q/ubiquinone-10 to ubiquinol-10, a lipophilic radical-trapping antioxidant that prevents lipid oxidative damage and consequently ferroptosis. Acts in parallel to GPX4 to suppress phospholipid peroxidation and ferroptosis. This anti-ferroptotic function is independent of cellular glutathione levels. Also acts as a potent radical-trapping antioxidant by mediating warfarin-resistant vitamin K reduction in the canonical vitamin K cycle: catalyzes NAD(P)H-dependent reduction of vitamin K (phylloquinone, menaquinone-4 and menadione) to hydroquinone forms. Hydroquinones act as potent radical-trapping antioxidants inhibitor of phospholipid peroxidation and ferroptosis. May play a role in mitochondrial stress signaling. Upon oxidative stress, associates with the lipid peroxidation end product 4-hydroxy-2-nonenal (HNE) forming a lipid adduct devoid of oxidoreductase activity, which then translocates from mitochondria into the nucleus triggering DNA damage and cell death. In Taeniopygia guttata (Zebra finch), this protein is Ferroptosis suppressor protein 1 (AIFM2).